The sequence spans 243 residues: 1-(5-phosphoribosyl)-5-[(5-phosphoribosylamino)methylideneamino] imidazole-4-carboxamide isomerase (243 aa).

Catalysis depends on Asp8, which acts as the Proton acceptor. Catalysis depends on Asp129, which acts as the Proton donor.

Belongs to the HisA/HisF family.

It is found in the cytoplasm. The catalysed reaction is 1-(5-phospho-beta-D-ribosyl)-5-[(5-phospho-beta-D-ribosylamino)methylideneamino]imidazole-4-carboxamide = 5-[(5-phospho-1-deoxy-D-ribulos-1-ylimino)methylamino]-1-(5-phospho-beta-D-ribosyl)imidazole-4-carboxamide. It functions in the pathway amino-acid biosynthesis; L-histidine biosynthesis; L-histidine from 5-phospho-alpha-D-ribose 1-diphosphate: step 4/9. This chain is 1-(5-phosphoribosyl)-5-[(5-phosphoribosylamino)methylideneamino] imidazole-4-carboxamide isomerase, found in Parvibaculum lavamentivorans (strain DS-1 / DSM 13023 / NCIMB 13966).